The primary structure comprises 114 residues: Probable 4-amino-4-deoxy-L-arabinose-phosphoundecaprenol flippase subunit ArnE (114 aa).

3 helical membrane passes run 41–61, 64–84, and 91–111; these read MWLW…LLVL, MDVG…TLVG, and PVDP…FQLG.

This sequence belongs to the ArnE family. As to quaternary structure, heterodimer of ArnE and ArnF.

The protein localises to the cell inner membrane. The protein operates within bacterial outer membrane biogenesis; lipopolysaccharide biosynthesis. Functionally, translocates 4-amino-4-deoxy-L-arabinose-phosphoundecaprenol (alpha-L-Ara4N-phosphoundecaprenol) from the cytoplasmic to the periplasmic side of the inner membrane. In Pseudomonas savastanoi pv. phaseolicola (strain 1448A / Race 6) (Pseudomonas syringae pv. phaseolicola (strain 1448A / Race 6)), this protein is Probable 4-amino-4-deoxy-L-arabinose-phosphoundecaprenol flippase subunit ArnE.